The following is a 626-amino-acid chain: DEAD-box ATP-dependent RNA helicase 16 (626 aa).

The segment at 1–48 (MGKTKLKPVEDVNSEVVDEVEKAEEVEEQRNDREQEEEQKEEEAPKSF) is disordered. Residues 9–47 (VEDVNSEVVDEVEKAEEVEEQRNDREQEEEQKEEEAPKS) are a coiled coil. The segment covering 12-27 (VNSEVVDEVEKAEEVE) has biased composition (acidic residues). The Q motif motif lies at 46–74 (KSFEELGLDSRLIRALTKKGIEKPTLIQQ). Positions 77–259 (IPYILEGKDV…KLILHNPIVL (183 aa)) constitute a Helicase ATP-binding domain. 90-97 (AKTGSGKT) provides a ligand contact to ATP. The DEAD box signature appears at 207–210 (DEAD). The Helicase C-terminal domain occupies 293 to 477 (ALLKLEVVQK…PFPLLTENAV (185 aa)). Positions 356–385 (IATDDNSQTKKQKEEAKGEANKENKKNNKR) form a coiled coil. The span at 363–381 (QTKKQKEEAKGEANKENKK) shows a compositional bias: basic and acidic residues. 2 disordered regions span residues 363–388 (QTKKQKEEAKGEANKENKKNNKRSKP) and 568–626 (AMGN…QKTV).

It belongs to the DEAD box helicase family. DDX56/DBP9 subfamily.

The enzyme catalyses ATP + H2O = ADP + phosphate + H(+). This is DEAD-box ATP-dependent RNA helicase 16 (RH16) from Arabidopsis thaliana (Mouse-ear cress).